The chain runs to 291 residues: Small ribosomal subunit protein uS2 (291 aa).

The segment at 235-291 is disordered; it reads NLQEDEESGDSGVDPYQDREEEITDYSNYTPKDEASGDDEDEEDNSLVNDEDLYDDK. Positions 270–291 are enriched in acidic residues; that stretch reads SGDDEDEEDNSLVNDEDLYDDK.

Belongs to the universal ribosomal protein uS2 family.

The protein is Small ribosomal subunit protein uS2 of Treponema denticola (strain ATCC 35405 / DSM 14222 / CIP 103919 / JCM 8153 / KCTC 15104).